The following is a 281-amino-acid chain: MKYIGAHVSAAGGVDQAVIRAHEIKATAFALFTKNQRQWQAAPLSTEVIDRFKAACEQYAYMSAQILPHDSYLINLGHPDGEALEKSRIAFIDEMSRCQLLGLSLLNFHPGSHLKQIEEADCLARIAESINIALAETDGVTAVIENTAGQGSNLGFRFEHLAAIIDGVEDKSRVGVCIDTCHAFAGGYDLRTEADCEATFAEFDRIVGFRYLRGMHLNDAKSAFGSRVDRHHSLGEGNIGKTAFSYIMKDTRFDGIPMILETVNPDIWADEIAWLKSEAQY.

9 residues coordinate Zn(2+): His69, His109, Glu145, Asp179, His182, His216, Asp229, His231, and Glu261.

Belongs to the AP endonuclease 2 family. It depends on Zn(2+) as a cofactor.

It carries out the reaction Endonucleolytic cleavage to 5'-phosphooligonucleotide end-products.. In terms of biological role, endonuclease IV plays a role in DNA repair. It cleaves phosphodiester bonds at apurinic or apyrimidinic (AP) sites, generating a 3'-hydroxyl group and a 5'-terminal sugar phosphate. This chain is Probable endonuclease 4, found in Pectobacterium atrosepticum (strain SCRI 1043 / ATCC BAA-672) (Erwinia carotovora subsp. atroseptica).